The sequence spans 422 residues: MTDAKRQAALDYHAKPIPGKLSVELTKPTATARDLALAYSPGVAEPVREIARDPENAYLYTGKGNLVAVISDGSAILGLGNLGPLASKPVMEGKGVLFKRFAGINSIDVEVDAESPQAFIDTVARIADSWGGINLEDIKAPECFEIERALVEQCNIPVFHDDQHGTAIVTAAGMLNALDIAGKSLESARIVCLGAGAAAIACMKLLVACGARSENLVMLDRKGVIHSGREDLNQYKAMFAIDTDKRTLADAIEGADVFVGLSGPGLMTEEHIRRMADNPVVFACTNPDPEIHPDLARETRPDVIMATGRSDYPNQVNNVLGFPFIFRGALDVRATRINEDMKVAAVHALKDLAREPVPQAVLEAYDKDAMSFGRDYIIPTPIDVRLLERVSSAVAQAAVDSGVARRPYPAHYPLKTVDDVYG.

Tyr39 functions as the Proton donor in the catalytic mechanism. Lys94 functions as the Proton acceptor in the catalytic mechanism. Position 94 (Lys94) interacts with substrate. Glu136, Asp137, and Asp162 together coordinate a divalent metal cation. Residues 195–198, Asn286, and Asn318 each bind NADP(+); that span reads AGAA. Asn318 lines the substrate pocket.

The protein belongs to the malic enzymes family. Mg(2+) is required as a cofactor. It depends on Mn(2+) as a cofactor.

The catalysed reaction is (S)-malate + NADP(+) = pyruvate + CO2 + NADPH. It carries out the reaction oxaloacetate + H(+) = pyruvate + CO2. The polypeptide is NADP-dependent malic enzyme (Halomonas elongata (strain ATCC 33173 / DSM 2581 / NBRC 15536 / NCIMB 2198 / 1H9)).